A 185-amino-acid polypeptide reads, in one-letter code: Thymidine kinase (185 aa).

ATP-binding positions include 10 to 17 and 83 to 86; these read GPMYSGKT and DEVQ. The active-site Proton acceptor is Glu84. Zn(2+) contacts are provided by Cys140, Cys143, Cys173, and Cys176.

Belongs to the thymidine kinase family. As to quaternary structure, homotetramer.

Its subcellular location is the cytoplasm. It carries out the reaction thymidine + ATP = dTMP + ADP + H(+). In Pseudothermotoga lettingae (strain ATCC BAA-301 / DSM 14385 / NBRC 107922 / TMO) (Thermotoga lettingae), this protein is Thymidine kinase.